Consider the following 1348-residue polypeptide: Kinesin-like protein KIF7 (1348 aa).

One can recognise a Kinesin motor domain in the interval 15–349 (PVRVALRVRP…LNYASRAQNI (335 aa)). 94-101 (GQTGSGKT) is a binding site for ATP. Residues 358–479 (HPEAERVPEE…EDQAAQGTSG (122 aa)) are interaction with DLG5. The tract at residues 358 to 1211 (HPEAERVPEE…LGRHMWINQE (854 aa)) is interaction with SMO. Disordered stretches follow at residues 451–486 (RSTL…DEGT) and 607–674 (AQAD…VCPE). Positions 480–542 (RKGDEGTQQL…ELRLRLELAQ (63 aa)) form a coiled coil. Residues 620 to 636 (SEEEGEEEEEEEEEEEE) show a composition bias toward acidic residues. Coiled-coil stretches lie at residues 698 to 1057 (APAA…IEAL) and 1109 to 1211 (FDKV…INQE). Residue Ser-903 is modified to Phosphoserine. Disordered regions lie at residues 1288–1314 (LCSE…VLPM) and 1328–1348 (KPRW…KNPL).

Belongs to the TRAFAC class myosin-kinesin ATPase superfamily. Kinesin family. Can form homodimers and interacts with microtubules. Interacts with GLI1 and SMO. Interacts with GLI2, GLI3 and SUFU. Interacts with NPHP1. Interacts with SMO and DLG5 (via PDZ4 or guanylate kinase-like domain). Polyubiquitinated by UBR3. As to expression, expressed in heart, lung, liver, kidney, testis, spleen and cerebellum.

Its subcellular location is the cell projection. It is found in the cilium. The protein localises to the cytoplasm. It localises to the cytoskeleton. The protein resides in the cilium basal body. In terms of biological role, essential for hedgehog signaling regulation: acts both as a negative and a positive regulator of sonic hedgehog (Shh) and Indian hedgehog (Ihh) pathways, acting downstream of SMO, through both SUFU-dependent and -independent mechanisms. Involved in the regulation of microtubular dynamics. Required for proper organization of the ciliary tip and control of ciliary localization of SUFU-GLI2 complexes. Required for localization of GLI3 to cilia in response to Shh. Negatively regulates Shh signaling by preventing inappropriate activation of the transcriptional activator GLI2 in the absence of ligand. Positively regulates Shh signaling by preventing the processing of the transcription factor GLI3 into its repressor form. In keratinocytes, promotes the dissociation of SUFU-GLI2 complexes, GLI2 nuclear translocation and Shh signaling activation. Involved in the regulation of epidermal differentiation and chondrocyte development. The polypeptide is Kinesin-like protein KIF7 (Kif7) (Mus musculus (Mouse)).